The sequence spans 626 residues: MTVEERQGRVGGHGVSGGGGGRDQFPVGMRVLAVDDDPTCLKILENLLLRCQYHVTTTGQAATALKLLRENKDQFDLVISDVHMPDMDGFKLLELVGLEMDLPVIMLSANGETQTVMKGITHGACDYLLKPVRLEQLRTIWQHVIRRKNCDAKNRGNDDDAGQKAQGMNNEGESIGANRNKRQSRKSRDENGDDGDDSDENSNENGDSSTQKKPRVVWSVELHRKFVAAVNQLGIEKAVPKKILDLMNVENITRENVASHLQKYRLYLKRLSTDASRQANLAAAFGGRNPAYINMNSFGNYNAYGRYRTVPTAGHTQANNILTRMNSPSAFGVHGLLHSQPIQLGHAQNNLSTSLNDLGGLNNGNMIRGAQMSTILTGPSGNSFPNISNGAPLATANRSLQPLESSSQQHLSRVHSSSADPFSTLVGESPQFPDLGRTTNTWQTAVPSNIQDRGHNDNMSQATLHMNGPKIEPVSSFTSSNQIPLLGNEMQGQVASLASNVPIAFNQDTSPFNYGSSTNSRDMLNNSHVFSNSSINTSLPNLSLDNPAVPKQTLDRGNTGIVSPMQDGRIHHQAVSNQLNYNDDLMRTTGLQRGLSGGLDDIVVDMFRPDREDDGVPYIDGDWELV.

The tract at residues 1-22 is disordered; that stretch reads MTVEERQGRVGGHGVSGGGGGR. Residues 9 to 22 show a composition bias toward gly residues; sequence RVGGHGVSGGGGGR. The region spanning 30–145 is the Response regulatory domain; sequence RVLAVDDDPT…QLRTIWQHVI (116 aa). Position 81 is a 4-aspartylphosphate (Asp81). Residues 151–162 show a composition bias toward basic and acidic residues; the sequence is DAKNRGNDDDAG. Disordered stretches follow at residues 151–215 and 400–440; these read DAKN…KKPR and LQPL…RTTN. Acidic residues predominate over residues 191–202; the sequence is NGDDGDDSDENS. Residues 210-269 constitute a DNA-binding region (myb-like GARP); that stretch reads TQKKPRVVWSVELHRKFVAAVNQLGIEKAVPKKILDLMNVENITRENVASHLQKYRLYLK. The segment covering 400 to 421 has biased composition (polar residues); sequence LQPLESSSQQHLSRVHSSSADP.

Belongs to the ARR family. Type-B subfamily. In terms of processing, two-component system major event consists of a His-to-Asp phosphorelay between a sensor histidine kinase (HK) and a response regulator (RR). In plants, the His-to-Asp phosphorelay involves an additional intermediate named Histidine-containing phosphotransfer protein (HPt). This multistep phosphorelay consists of a His-Asp-His-Asp sequential transfer of a phosphate group between first a His and an Asp of the HK protein, followed by the transfer to a conserved His of the HPt protein and finally the transfer to an Asp in the receiver domain of the RR protein.

The protein localises to the nucleus. In terms of biological role, transcriptional activator that binds specific DNA sequence. Functions as a response regulator involved in His-to-Asp phosphorelay signal transduction system. Phosphorylation of the Asp residue in the receiver domain activates the ability of the protein to promote the transcription of target genes. May directly activate some type-A response regulators in response to cytokinins. The protein is Two-component response regulator ORR24 of Oryza sativa subsp. indica (Rice).